The primary structure comprises 346 residues: Flap endonuclease 1 (346 aa).

Residues 1–102 (MGVTELGKLI…LEIEQRKKAK (102 aa)) form an N-domain region. 7 residues coordinate Mg(2+): Asp-31, Asp-84, Glu-156, Glu-158, Asp-177, Asp-179, and Asp-239. The interval 120-261 (DVAKYAKRAI…KALKLIWEFG (142 aa)) is I-domain.

Belongs to the XPG/RAD2 endonuclease family. FEN1 subfamily. Interacts with PCNA. PCNA stimulates the nuclease activity without altering cleavage specificity. Mg(2+) serves as cofactor.

Its function is as follows. Structure-specific nuclease with 5'-flap endonuclease and 5'-3' exonuclease activities involved in DNA replication and repair. During DNA replication, cleaves the 5'-overhanging flap structure that is generated by displacement synthesis when DNA polymerase encounters the 5'-end of a downstream Okazaki fragment. Binds the unpaired 3'-DNA end and kinks the DNA to facilitate 5' cleavage specificity. Cleaves one nucleotide into the double-stranded DNA from the junction in flap DNA, leaving a nick for ligation. Also involved in the base excision repair (BER) pathway. Acts as a genome stabilization factor that prevents flaps from equilibrating into structures that lead to duplications and deletions. Also possesses 5'-3' exonuclease activity on nicked or gapped double-stranded DNA. This chain is Flap endonuclease 1, found in Pyrobaculum calidifontis (strain DSM 21063 / JCM 11548 / VA1).